A 96-amino-acid chain; its full sequence is UPF0235 protein YPN_3141 (96 aa).

It belongs to the UPF0235 family.

This is UPF0235 protein YPN_3141 from Yersinia pestis bv. Antiqua (strain Nepal516).